A 79-amino-acid polypeptide reads, in one-letter code: Dolichyl-diphosphooligosaccharide--protein glycosyltransferase subunit TMEM258 (79 aa).

2 helical membrane-spanning segments follow: residues 19–39 (PLLT…FTMI) and 55–75 (FIAA…LLWV).

The protein belongs to the OST5 family. Component of the oligosaccharyltransferase (OST) complex.

The protein resides in the membrane. The protein operates within protein modification; protein glycosylation. Subunit of the oligosaccharyl transferase (OST) complex that catalyzes the initial transfer of a defined glycan (Glc(3)Man(9)GlcNAc(2) in eukaryotes) from the lipid carrier dolichol-pyrophosphate to an asparagine residue within an Asn-X-Ser/Thr consensus motif in nascent polypeptide chains, the first step in protein N-glycosylation. N-glycosylation occurs cotranslationally and the complex associates with the Sec61 complex at the channel-forming translocon complex that mediates protein translocation across the endoplasmic reticulum (ER). All subunits are required for a maximal enzyme activity. In Caenorhabditis elegans, this protein is Dolichyl-diphosphooligosaccharide--protein glycosyltransferase subunit TMEM258.